Here is a 160-residue protein sequence, read N- to C-terminus: Ribosomal RNA large subunit methyltransferase H (160 aa).

S-adenosyl-L-methionine-binding positions include Leu76, Gly108, and Phe127–Trp132.

The protein belongs to the RNA methyltransferase RlmH family. Homodimer.

The protein localises to the cytoplasm. It catalyses the reaction pseudouridine(1915) in 23S rRNA + S-adenosyl-L-methionine = N(3)-methylpseudouridine(1915) in 23S rRNA + S-adenosyl-L-homocysteine + H(+). Functionally, specifically methylates the pseudouridine at position 1915 (m3Psi1915) in 23S rRNA. The chain is Ribosomal RNA large subunit methyltransferase H from Bartonella henselae (strain ATCC 49882 / DSM 28221 / CCUG 30454 / Houston 1) (Rochalimaea henselae).